The chain runs to 191 residues: Orotate phosphoribosyltransferase (191 aa).

116 to 124 (EDVVTTGGS) contributes to the 5-phospho-alpha-D-ribose 1-diphosphate binding site. The orotate site is built by Thr120 and Arg148.

The protein belongs to the purine/pyrimidine phosphoribosyltransferase family. PyrE subfamily. As to quaternary structure, homodimer. Requires Mg(2+) as cofactor.

It catalyses the reaction orotidine 5'-phosphate + diphosphate = orotate + 5-phospho-alpha-D-ribose 1-diphosphate. It participates in pyrimidine metabolism; UMP biosynthesis via de novo pathway; UMP from orotate: step 1/2. Its function is as follows. Catalyzes the transfer of a ribosyl phosphate group from 5-phosphoribose 1-diphosphate to orotate, leading to the formation of orotidine monophosphate (OMP). The protein is Orotate phosphoribosyltransferase of Carboxydothermus hydrogenoformans (strain ATCC BAA-161 / DSM 6008 / Z-2901).